We begin with the raw amino-acid sequence, 151 residues long: Putative pre-16S rRNA nuclease (151 aa).

Belongs to the YqgF nuclease family.

The protein resides in the cytoplasm. In terms of biological role, could be a nuclease involved in processing of the 5'-end of pre-16S rRNA. This is Putative pre-16S rRNA nuclease from Prochlorococcus marinus (strain MIT 9515).